The primary structure comprises 119 residues: Platelet basic protein (119 aa).

The N-terminal stretch at 1 to 33 (MSLRLGAISSCTTSSPFPVLQVLLPLSLLLTTL) is a signal peptide. A propeptide spanning residues 34–39 (VPATMG) is cleaved from the precursor. 2 cysteine pairs are disulfide-bonded: cysteine 54/cysteine 80 and cysteine 56/cysteine 96.

The protein localises to the secreted. In terms of biological role, chemoattractant factor for neutrophils. The sequence is that of Platelet basic protein (PPBP) from Sus scrofa (Pig).